A 302-amino-acid chain; its full sequence is Enolase-phosphatase E1 (302 aa).

The segment covering 1–10 (MSDSRLRRRQ) has biased composition (basic residues). The tract at residues 1–25 (MSDSRLRRRQGTAGTDNKRRADGPH) is disordered. A compositionally biased stretch (basic and acidic residues) spans 16-25 (DNKRRADGPH). The Mg(2+) site is built by Asp40 and Glu42. Substrate contacts are provided by residues 183–184 (SS) and Lys217. Asp242 provides a ligand contact to Mg(2+).

This sequence belongs to the HAD-like hydrolase superfamily. MasA/MtnC family. As to quaternary structure, monomer. Mg(2+) is required as a cofactor.

Its subcellular location is the cytoplasm. It localises to the nucleus. It carries out the reaction 5-methylsulfanyl-2,3-dioxopentyl phosphate + H2O = 1,2-dihydroxy-5-(methylsulfanyl)pent-1-en-3-one + phosphate. Its pathway is amino-acid biosynthesis; L-methionine biosynthesis via salvage pathway; L-methionine from S-methyl-5-thio-alpha-D-ribose 1-phosphate: step 3/6. It participates in amino-acid biosynthesis; L-methionine biosynthesis via salvage pathway; L-methionine from S-methyl-5-thio-alpha-D-ribose 1-phosphate: step 4/6. Its function is as follows. Bifunctional enzyme that catalyzes the enolization of 2,3-diketo-5-methylthiopentyl-1-phosphate (DK-MTP-1-P) into the intermediate 2-hydroxy-3-keto-5-methylthiopentenyl-1-phosphate (HK-MTPenyl-1-P), which is then dephosphorylated to form the acireductone 1,2-dihydroxy-3-keto-5-methylthiopentene (DHK-MTPene). The chain is Enolase-phosphatase E1 from Branchiostoma floridae (Florida lancelet).